Here is a 513-residue protein sequence, read N- to C-terminus: ATP synthase subunit alpha (513 aa).

ATP is bound at residue 169 to 176; the sequence is GDRQTGKT.

Belongs to the ATPase alpha/beta chains family. As to quaternary structure, F-type ATPases have 2 components, CF(1) - the catalytic core - and CF(0) - the membrane proton channel. CF(1) has five subunits: alpha(3), beta(3), gamma(1), delta(1), epsilon(1). CF(0) has three main subunits: a(1), b(2) and c(9-12). The alpha and beta chains form an alternating ring which encloses part of the gamma chain. CF(1) is attached to CF(0) by a central stalk formed by the gamma and epsilon chains, while a peripheral stalk is formed by the delta and b chains.

It is found in the cell inner membrane. The catalysed reaction is ATP + H2O + 4 H(+)(in) = ADP + phosphate + 5 H(+)(out). Functionally, produces ATP from ADP in the presence of a proton gradient across the membrane. The alpha chain is a regulatory subunit. This Klebsiella pneumoniae (strain 342) protein is ATP synthase subunit alpha.